A 47-amino-acid chain; its full sequence is Defensin NsD7 (47 aa).

4 disulfide bridges follow: cysteine 3–cysteine 47, cysteine 14–cysteine 34, cysteine 20–cysteine 41, and cysteine 24–cysteine 43. A 1,2-diacyl-sn-glycero-3-phosphate contacts are provided by lysine 4, histidine 33, lysine 36, and arginine 39.

The protein belongs to the DEFL family. As to quaternary structure, in the presence of phosphatidic acid (PA), forms right-handed double helices which tend to bundle into fibrils. Each helix is a repetition of dimers containing 2 bound molecules of PA per dimer. Dimers are arranged orthogonally in a tip-to-tip configuration with 1 molecule of PA located at the dimer contact interface. Association of 2 helices to form a double helix depends on intercalating isoleucine residues Ile-15 and Ile-37. Bundling of double helices into fibrils depends on Arg-26.

It localises to the vacuole. Plant defense peptide. Disrupts membranes containing phosphatidic acid (PA) via a PA-dependent oligomerization process. This is Defensin NsD7 from Nicotiana suaveolens (Australian tobacco).